A 373-amino-acid chain; its full sequence is Glutamine synthetase (373 aa).

Ala-2 is modified (N-acetylalanine). A required for glutamine-induced ubiquitination by CRL4(CRBN) and proteasomal degradation region spans residues 2 to 25 (ATSASSHLNKGIKQVYMSLPQGEK). Residues Lys-11 and Lys-14 each carry the N6-acetyllysine modification. Residues 24-106 (EKVQAMYIWI…VFCEVFKYNR (83 aa)) enclose the GS beta-grasp domain. Tyr-104 bears the Phosphotyrosine mark. The GS catalytic domain maps to 113 to 373 (LRHTCKRIMD…TGDEPFQYKN (261 aa)). Residue Glu-134 coordinates ATP. Residues Glu-134, Glu-136, Glu-196, and Glu-203 each contribute to the Mn(2+) site. ATP is bound at residue 203–208 (EFQIGP). Residue 246–247 (NW) coordinates L-glutamate. Residue His-253 coordinates Mn(2+). ATP-binding positions include 255–257 (NFS), Arg-319, and Arg-324. Arg-319 contacts L-glutamate. 336-338 (YFE) provides a ligand contact to ADP. A Mn(2+)-binding site is contributed by Glu-338. Arg-340 serves as a coordination point for L-glutamate. Position 343 is a phosphoserine (Ser-343).

The protein belongs to the glutamine synthetase family. As to quaternary structure, decamer; composed of two pentamers. Interacts with PALMD. Interacts with RHOJ. Interacts with BEST2; this interaction tethers a fraction of GLUL to the membrane, causing a decrease of cytosolic glutamine synthase (GS) activity and inhibits the chloride channel activity of BEST2 by affecting the gating at the aperture in the absence of intracellular glutamate. Mg(2+) is required as a cofactor. The cofactor is Mn(2+). Palmitoylated; undergoes autopalmitoylation. Post-translationally, acetylated by EP300/p300; acetylation is stimulated by increased glutamine levels and promotes ubiquitin-mediated proteasomal degradation. In terms of processing, ubiquitinated by ZNRF1. Ubiquitinated by the DCX (DDB1-CUL4-X-box) E3 ubiquitin-protein ligase complex called CRL4(CRBN), leading to proteasomal degradation.

The protein localises to the cytoplasm. Its subcellular location is the cytosol. The protein resides in the microsome. It is found in the mitochondrion. It localises to the cell membrane. The catalysed reaction is L-glutamate + NH4(+) + ATP = L-glutamine + ADP + phosphate + H(+). The enzyme catalyses L-cysteinyl-[protein] + hexadecanoyl-CoA = S-hexadecanoyl-L-cysteinyl-[protein] + CoA. Glutamine synthetase activity is inhibited by methionine sulfoximine (MSO). Functionally, glutamine synthetase that catalyzes the ATP-dependent conversion of glutamate and ammonia to glutamine. Its role depends on tissue localization: in the brain, it regulates the levels of toxic ammonia and converts neurotoxic glutamate to harmless glutamine, whereas in the liver, it is one of the enzymes responsible for the removal of ammonia. Plays a key role in ammonium detoxification during erythropoiesis: the glutamine synthetase activity is required to remove ammonium generated by porphobilinogen deaminase (HMBS) during heme biosynthesis to prevent ammonium accumulation and oxidative stress. Essential for proliferation of fetal skin fibroblasts. Independently of its glutamine synthetase activity, required for endothelial cell migration during vascular development. Involved in angiogenesis by regulating membrane localization and activation of the GTPase RHOJ, possibly by promoting RHOJ palmitoylation. May act as a palmitoyltransferase for RHOJ: able to autopalmitoylate and then transfer the palmitoyl group to RHOJ. Plays a role in ribosomal 40S subunit biogenesis. Through the interaction with BEST2, inhibits BEST2 channel activity by affecting the gating at the aperture in the absence of intracellular L-glutamate, but sensitizes BEST2 to intracellular L-glutamate, which promotes the opening of BEST2 and thus relieves its inhibitory effect on BEST2. The chain is Glutamine synthetase from Canis lupus familiaris (Dog).